The sequence spans 156 residues: Transcriptional repressor NrdR (156 aa).

A zinc finger lies at 3–34 (CPFCGNVDTQVKDSRPAEDHVAIRRRRFCPAC). One can recognise an ATP-cone domain in the interval 49–139 (LVVIKSNGKR…VYKNFQATGD (91 aa)).

Belongs to the NrdR family. It depends on Zn(2+) as a cofactor.

Negatively regulates transcription of bacterial ribonucleotide reductase nrd genes and operons by binding to NrdR-boxes. This is Transcriptional repressor NrdR from Jannaschia sp. (strain CCS1).